Here is a 2365-residue protein sequence, read N- to C-terminus: TRIO and F-actin-binding protein (2365 aa).

Disordered regions lie at residues 48–1106, 1168–1554, 1593–1667, and 1679–1751; these read VPYC…HEPL, HRDA…SERR, LPRK…WPKI, and AGLE…TSWR. Low complexity predominate over residues 132–151; sequence SDPTSSPDSATPDDTSNSSS. H221 is subject to Phosphothreonine. Polar residues-rich tracts occupy residues 239 to 271, 291 to 375, 403 to 422, 429 to 471, 478 to 520, 527 to 569, 576 to 618, 625 to 650, 661 to 674, 683 to 701, 709 to 722, 745 to 785, and 807 to 837; these read TLTQ…QAAS, RASS…TPQR, RTSC…SPNR, RTSC…SPRT, SSPN…NPRT, RASS…TSCA, and IRAT…PKTS. Positions 324–348 are essentiel for its aggregation; that stretch reads STQEDTPRASSTQWNTPRASSPSRS. Position 457 is a phosphothreonine (Q457). A compositionally biased stretch (basic and acidic residues) spans 839–854; the sequence is TKRDNLRPTCTQRDRT. Polar residues-rich tracts occupy residues 855 to 898, 913 to 927, and 945 to 994; these read QSFS…SSPH, PTQS…PSRS, and DRPQ…TSSP. Residues 1045–1056 are compositionally biased toward basic and acidic residues; that stretch reads RAPESEPPHHEP. Residues 1195–1206 are compositionally biased toward polar residues; sequence SMESLAPSTDSL. Basic and acidic residues-rich tracts occupy residues 1260–1270 and 1303–1319; these read ETRHNLEREEY and GRAE…RKSE. Over residues 1332–1349 the composition is skewed to low complexity; sequence SQQPSQGQSQLLRRQSSP. Composition is skewed to basic and acidic residues over residues 1378–1387 and 1402–1411; these read SPEKRPEGDR and TPERELRTQR. The span at 1452–1461 shows a compositional bias: gly residues; it reads GGLGPGGWWG. The span at 1494–1508 shows a compositional bias: basic and acidic residues; that stretch reads WEEKPTHELPRELGK. A compositionally biased stretch (polar residues) spans 1524–1534; that stretch reads ESSQSWHSGTP. Over residues 1594 to 1606 the composition is skewed to basic and acidic residues; it reads PRKDPAGHRDDLA. Over residues 1645–1664 the composition is skewed to polar residues; that stretch reads ALQSQSPVQLPSPACTSTQW. Over residues 1696–1705 the composition is skewed to low complexity; that stretch reads PSLPELQFQP. Positions 1724-1735 are enriched in basic and acidic residues; that stretch reads KQADSADKRPAE. Residues 1778 to 1887 form the PH domain; it reads LNFKKGWMSI…WIEALRKTVR (110 aa). Phosphoserine is present on S1796. Disordered stretches follow at residues 1889-2017 and 2174-2194; these read TSAP…LTED and LSKT…HQSD. R1930 is modified (omega-N-methylarginine). Phosphoserine occurs at positions 1949 and 1955. The segment covering 1965 to 1997 has biased composition (basic and acidic residues); that stretch reads TPDRLAKQEELERDLAQRSEERRKWFEATDSRT. Coiled-coil stretches lie at residues 2062-2247 and 2281-2361; these read SDGH…NQEL and ELEV…SMRN.

As to quaternary structure, isoform 1 forms aggregates. Isoform 1 binds to TRIO and F-actin. Isoform 1 may also interact with myosin II. Interacts with HECTD3. Interacts with PJVK. Interacts with TERF1; mediates TERF1 localization to the centrosome. In terms of processing, ubiquitinated by HECTD3, leading to its degradation by the proteasome. Phosphorylation at Thr-457 by PLK1 ensures mitotic progression and is essential for accurate chromosome segregation. Phosphorylation at residues Thr-221 and Thr-457 by kinase NEK2A and PLK1 coordinates TERF1 translocation from telomere to spindle pole. In terms of tissue distribution, widely expressed. Highly expressed in heart and placenta. As to expression, expressed in fetal brain, retina and cochlea but is not detectable in the other tissues.

The protein resides in the nucleus. It localises to the cytoplasm. It is found in the cytoskeleton. Its subcellular location is the microtubule organizing center. The protein localises to the centrosome. The protein resides in the midbody. It localises to the chromosome. It is found in the telomere. Regulates actin cytoskeletal organization, cell spreading and cell contraction by directly binding and stabilizing filamentous F-actin and prevents its depolymerization. May also serve as a linker protein to recruit proteins required for F-actin formation and turnover. Essential for correct mitotic progression. Its function is as follows. Plays a pivotal role in the formation of stereocilia rootlets. The polypeptide is TRIO and F-actin-binding protein (TRIOBP) (Homo sapiens (Human)).